The following is a 394-amino-acid chain: Phosphoglycerate kinase (394 aa).

Residues 21-23, arginine 36, 59-62, arginine 118, and arginine 151 each bind substrate; these read DFN and HLGR. Serine 183 carries the phosphoserine modification. ATP contacts are provided by lysine 201 and glycine 292. Residue threonine 299 is modified to Phosphothreonine. ATP contacts are provided by residues glutamate 323 and 350–353; that span reads GGDS.

Belongs to the phosphoglycerate kinase family. As to quaternary structure, monomer.

The protein localises to the cytoplasm. It carries out the reaction (2R)-3-phosphoglycerate + ATP = (2R)-3-phospho-glyceroyl phosphate + ADP. It functions in the pathway carbohydrate degradation; glycolysis; pyruvate from D-glyceraldehyde 3-phosphate: step 2/5. In Anoxybacillus flavithermus (strain DSM 21510 / WK1), this protein is Phosphoglycerate kinase.